A 198-amino-acid polypeptide reads, in one-letter code: Endonuclease V (198 aa).

Positions 38 and 101 each coordinate Mg(2+).

It belongs to the endonuclease V family. It depends on Mg(2+) as a cofactor.

The protein resides in the cytoplasm. It carries out the reaction Endonucleolytic cleavage at apurinic or apyrimidinic sites to products with a 5'-phosphate.. Functionally, DNA repair enzyme involved in the repair of deaminated bases. Selectively cleaves double-stranded DNA at the second phosphodiester bond 3' to a deoxyinosine leaving behind the intact lesion on the nicked DNA. The protein is Endonuclease V of Saccharolobus islandicus (strain M.14.25 / Kamchatka #1) (Sulfolobus islandicus).